The sequence spans 116 residues: Diuretic hormone class 2 (116 aa).

Residues 1-25 form the signal peptide; that stretch reads MTNRCACFALAFLLFCLLAISSIEA. A propeptide spanning residues 26–75 is cleaved from the precursor; it reads APMPSQSNGGYGGAGYNELEEVPDDLLMELMTRFGRTIIRARNDLENSKR. A Proline amide modification is found at Pro-106. The propeptide occupies 112–116; that stretch reads SETDV.

Its subcellular location is the secreted. Regulation of fluid secretion. Stimulates Malpighian tubules fluid secretion by activating the apical membrane V-ATPase via cyclic AMP of principal cells in the main secretory segment. The protein is Diuretic hormone class 2 (Dh31) of Drosophila melanogaster (Fruit fly).